The sequence spans 196 residues: dCTP deaminase, dUMP-forming (196 aa).

DCTP is bound by residues 101 to 106 (KSSLGR), Asp-119, 127 to 129 (TLE), Gln-148, Tyr-162, and Gln-174. Catalysis depends on Glu-129, which acts as the Proton donor/acceptor.

It belongs to the dCTP deaminase family. As to quaternary structure, homotrimer.

The catalysed reaction is dCTP + 2 H2O = dUMP + NH4(+) + diphosphate. It participates in pyrimidine metabolism; dUMP biosynthesis; dUMP from dCTP: step 1/1. Functionally, bifunctional enzyme that catalyzes both the deamination of dCTP to dUTP and the hydrolysis of dUTP to dUMP without releasing the toxic dUTP intermediate. This is dCTP deaminase, dUMP-forming from Thermobifida fusca (strain YX).